Consider the following 336-residue polypeptide: Atypical chemokine receptor 1 (336 aa).

The mediates Plasmodium vivax Duffy receptor (PVDR) binding stretch occupies residues 1-30 (MGNCLHRAELSPSTENSSQLDFEDVWNSSY). Residues 1–63 (MGNCLHRAEL…CNLLDDSALP (63 aa)) lie on the Extracellular side of the membrane. Asparagine 16 is a glycosylation site (N-linked (GlcNAc...) asparagine). Tyrosine 30 carries the post-translational modification Sulfotyrosine. Asparagine 33 is a glycosylation site (N-linked (GlcNAc...) asparagine). Tyrosine 41 carries the sulfotyrosine modification. Disulfide bonds link cysteine 51/cysteine 276 and cysteine 129/cysteine 195. The chain crosses the membrane as a helical span at residues 64-84 (FFILTSVLGILASSTVLFMLF). Topologically, residues 85–95 (RPLFRWQLCPG) are cytoplasmic. A helical membrane pass occupies residues 96–116 (WPVLAQLAVGSALFSIVVPVL). The Extracellular segment spans residues 117–129 (APGLGSTRSSALC). A helical membrane pass occupies residues 130 to 153 (SLGYCVWYGSAFAQALLLGCHASL). The Cytoplasmic portion of the chain corresponds to 154–166 (GHRLGAGQVPGLT). A helical transmembrane segment spans residues 167-187 (LGLTVGIWGVAALLTLPVTLA). Over 188 to 207 (SGASGGLCTLIYSTELKALQ) the chain is Extracellular. Residues 208-228 (ATHTVACLAIFVLLPLGLFGA) form a helical membrane-spanning segment. Topologically, residues 229-244 (KGLKKALGMGPGPWMN) are cytoplasmic. A helical membrane pass occupies residues 245–265 (ILWAWFIFWWPHGVVLGLDFL). Residues 266-287 (VRSKLLLLSTCLAQQALDLLLN) are Extracellular-facing. A helical transmembrane segment spans residues 288 to 308 (LAEALAILHCVATPLLLALFC). The Cytoplasmic portion of the chain corresponds to 309–336 (HQATRTLLPSLPLPEGWSSHLDTLGSKS).

This sequence belongs to the G-protein coupled receptor 1 family. Atypical chemokine receptor subfamily. As to quaternary structure, (Microbial infection) Interacts (via N-terminal extracellular domain) with Plasmodium vivax Duffy receptor (PVDR) (via PvRII region). (Microbial infection) Interacts (via N-terminal extracellular domain) with Plasmodium knowlesi Duffy receptor alpha form (DBPalpha) (via region II). Post-translationally, sulfation at Tyr-41 facilitates interaction with MGSA/CXCL1, RANTES/CCL5 and MCP-1/CCL2 but not IL8/CXCL8. Sulfation at Tyr-30 facilitates interaction with IL8/CXCL8. (Microbial infection) Sulfation at Tyr-41 facilitates interaction with Plasmodium vivax Duffy receptor (PVDR). Sulfation at Tyr-30/Tyr-41 and Tyr-41 alone increases binding affinity of Plasmodium vivax parasites and likely promotes invasion of red blood cells. In terms of processing, (Microbial infection) Sulfation at Tyr-41 facilitates interaction with Plasmodium knowlesi Duffy receptor alpha form (DBPalpha). Sulfation at Tyr-30/Tyr-41 and Tyr-41 alone increases binding affinity of Plasmodium knowlesi parasites and likely promotes invasion of red blood cells. As to expression, found in adult kidney, adult spleen, bone marrow and fetal liver. In particular, it is expressed along postcapillary venules throughout the body, except in the adult liver. Erythroid cells and postcapillary venule endothelium are the principle tissues expressing duffy. Fy(-A-B) individuals do not express duffy in the bone marrow, however they do, in postcapillary venule endothelium.

It is found in the early endosome. The protein resides in the recycling endosome. It localises to the membrane. Its function is as follows. Atypical chemokine receptor that controls chemokine levels and localization via high-affinity chemokine binding that is uncoupled from classic ligand-driven signal transduction cascades, resulting instead in chemokine sequestration, degradation, or transcytosis. Also known as interceptor (internalizing receptor) or chemokine-scavenging receptor or chemokine decoy receptor. Has a promiscuous chemokine-binding profile, interacting with inflammatory chemokines of both the CXC and the CC subfamilies but not with homeostatic chemokines. Acts as a receptor for chemokines including CCL2, CCL5, CCL7, CCL11, CCL13, CCL14, CCL17, CXCL5, CXCL6, IL8/CXCL8, CXCL11, GRO, RANTES, MCP-1 and TARC. May regulate chemokine bioavailability and, consequently, leukocyte recruitment through two distinct mechanisms: when expressed in endothelial cells, it sustains the abluminal to luminal transcytosis of tissue-derived chemokines and their subsequent presentation to circulating leukocytes; when expressed in erythrocytes, serves as blood reservoir of cognate chemokines but also as a chemokine sink, buffering potential surges in plasma chemokine levels. (Microbial infection) Acts as a receptor for the malaria parasite Plasmodium vivax. Functionally, (Microbial infection) Acts as a receptor for the malaria parasite Plasmodium knowlesi. This is Atypical chemokine receptor 1 (ACKR1) from Homo sapiens (Human).